A 119-amino-acid chain; its full sequence is Large ribosomal subunit protein uL18 (119 aa).

Belongs to the universal ribosomal protein uL18 family. In terms of assembly, part of the 50S ribosomal subunit; part of the 5S rRNA/L5/L18/L25 subcomplex. Contacts the 5S and 23S rRNAs.

This is one of the proteins that bind and probably mediate the attachment of the 5S RNA into the large ribosomal subunit, where it forms part of the central protuberance. The sequence is that of Large ribosomal subunit protein uL18 from Cereibacter sphaeroides (strain ATCC 17025 / ATH 2.4.3) (Rhodobacter sphaeroides).